Here is a 228-residue protein sequence, read N- to C-terminus: 7-cyano-7-deazaguanine synthase (228 aa).

Residue 16 to 26 coordinates ATP; sequence FSGGQDSTTCL. Residues Cys195, Cys203, Cys206, and Cys209 each coordinate Zn(2+).

Belongs to the QueC family. Zn(2+) serves as cofactor.

The enzyme catalyses 7-carboxy-7-deazaguanine + NH4(+) + ATP = 7-cyano-7-deazaguanine + ADP + phosphate + H2O + H(+). It functions in the pathway purine metabolism; 7-cyano-7-deazaguanine biosynthesis. In terms of biological role, catalyzes the ATP-dependent conversion of 7-carboxy-7-deazaguanine (CDG) to 7-cyano-7-deazaguanine (preQ(0)). This Haemophilus influenzae (strain ATCC 51907 / DSM 11121 / KW20 / Rd) protein is 7-cyano-7-deazaguanine synthase.